The primary structure comprises 140 residues: Holo-[acyl-carrier-protein] synthase (140 aa).

The Mg(2+) site is built by Asp8 and Glu62.

This sequence belongs to the P-Pant transferase superfamily. AcpS family. It depends on Mg(2+) as a cofactor.

The protein resides in the cytoplasm. The enzyme catalyses apo-[ACP] + CoA = holo-[ACP] + adenosine 3',5'-bisphosphate + H(+). Functionally, transfers the 4'-phosphopantetheine moiety from coenzyme A to a Ser of acyl-carrier-protein. This is Holo-[acyl-carrier-protein] synthase from Cupriavidus pinatubonensis (strain JMP 134 / LMG 1197) (Cupriavidus necator (strain JMP 134)).